Consider the following 69-residue polypeptide: MTKATDIRTKSADELNEQLLQLKKEQFNLRFQRASGQLENTARVREVRRDIARIKTILGERTRSAQPAS.

The protein belongs to the universal ribosomal protein uL29 family.

The protein is Large ribosomal subunit protein uL29 of Rhodospirillum centenum (strain ATCC 51521 / SW).